Here is a 213-residue protein sequence, read N- to C-terminus: MGQKIHPLGFRLGVTQEHRAHWFAKPSEYKFLVEEDNYIRKYLNAKLANAGVARIDIQRKADQVEIEIYTARPGLVVGRTGKGIENLIRDLQDKLRNKRKFRITITYLQEPDLESTLIGEFIAQRLQERKPFRRAIRQAVQRAKRAGVQGIKIQVAGRLNGAEIARSEWVREGRVPLQTLRADIDYSHCQAKTIYGIIGIKVWIFKGEKISIN.

The 71-residue stretch at 39–109 (IRKYLNAKLA…KFRITITYLQ (71 aa)) folds into the KH type-2 domain.

Belongs to the universal ribosomal protein uS3 family. As to quaternary structure, part of the 30S ribosomal subunit.

The protein resides in the plastid. The protein localises to the chloroplast. The chain is Small ribosomal subunit protein uS3c (rps3) from Mesostigma viride (Green alga).